We begin with the raw amino-acid sequence, 218 residues long: tRNA (guanine-N(7)-)-methyltransferase (218 aa).

Residues 1–25 (MRLKNKPWANELVEEHPESALDRPN) form a disordered region. Residues 13–25 (VEEHPESALDRPN) show a composition bias toward basic and acidic residues. Residues Glu45, Glu70, Asp97, and Asp119 each coordinate S-adenosyl-L-methionine. Residue Asp119 is part of the active site. Lys123 contributes to the substrate binding site. An interaction with RNA region spans residues 125–130 (RHEKRR). Residues Asp155 and 195–198 (TEYE) each bind substrate.

Belongs to the class I-like SAM-binding methyltransferase superfamily. TrmB family.

It catalyses the reaction guanosine(46) in tRNA + S-adenosyl-L-methionine = N(7)-methylguanosine(46) in tRNA + S-adenosyl-L-homocysteine. The protein operates within tRNA modification; N(7)-methylguanine-tRNA biosynthesis. Catalyzes the formation of N(7)-methylguanine at position 46 (m7G46) in tRNA. The polypeptide is tRNA (guanine-N(7)-)-methyltransferase (Lactobacillus delbrueckii subsp. bulgaricus (strain ATCC BAA-365 / Lb-18)).